Consider the following 223-residue polypeptide: Small ribosomal subunit protein uS3 (223 aa).

In terms of domain architecture, KH type-2 spans 39–107 (VREFLHKKLA…PVQINIEEVR (69 aa)).

Belongs to the universal ribosomal protein uS3 family. As to quaternary structure, part of the 30S ribosomal subunit. Forms a tight complex with proteins S10 and S14.

In terms of biological role, binds the lower part of the 30S subunit head. Binds mRNA in the 70S ribosome, positioning it for translation. The polypeptide is Small ribosomal subunit protein uS3 (Francisella tularensis subsp. mediasiatica (strain FSC147)).